The chain runs to 107 residues: Ferredoxin (107 aa).

The propeptide occupies 1–8 (MVSGVSRN). [2Fe-2S] cluster contacts are provided by Cys-45, Cys-51, and Cys-54.

[2Fe-2S] cluster serves as cofactor.

The protein resides in the hydrogenosome. Functionally, ferredoxins are iron-sulfur proteins that transfer electrons in a wide variety of metabolic reactions. In Psalteriomonas lanterna (Amoeboflagellate), this protein is Ferredoxin.